The chain runs to 219 residues: N-(5'-phosphoribosyl)anthranilate isomerase (219 aa).

The protein belongs to the TrpF family.

It catalyses the reaction N-(5-phospho-beta-D-ribosyl)anthranilate = 1-(2-carboxyphenylamino)-1-deoxy-D-ribulose 5-phosphate. It participates in amino-acid biosynthesis; L-tryptophan biosynthesis; L-tryptophan from chorismate: step 3/5. The chain is N-(5'-phosphoribosyl)anthranilate isomerase from Dehalococcoides mccartyi (strain ATCC BAA-2266 / KCTC 15142 / 195) (Dehalococcoides ethenogenes (strain 195)).